Reading from the N-terminus, the 442-residue chain is Shufflon protein B (442 aa).

Residues 1–361 (MKKYDRGWAS…TGAILSCQSG (361 aa)) form a constant region region. Residues 362 to 442 (TWKSSSASIW…SYFMKITCLK (81 aa)) are variable region.

This chain is Shufflon protein B, found in Escherichia coli.